We begin with the raw amino-acid sequence, 315 residues long: MPDMKLFAGNSIPKLAKFIAHRLYINLGNAAVGRFSDGEISVQINENVRGSDVFIIQSTCSPTNDNIMELVVMVDALRRASAGRITAVIPYFGYSRQDRRVRSARVPITAKVVADFLSSIGVDRVLTVDLHAEQIQGFFDVPVDNVFGSLILLEDMLQRELKNPIVVSPDIGGVVRARAIAKLLYDTDMAIIDKRRPRPNISQIMHIIGDVANRDCILVDDMIDTGGTLCKAAEALKERGAKRVFAYATHPIFSGKASENLKKSVIDEVVVCDTIPLEEKIRLLPNVRTLTLAGMLAEAIRRISNEESISAMFEH.

ATP is bound by residues 37–39 (DGE) and 96–97 (RQ). Residues H131 and D170 each contribute to the Mg(2+) site. The active site involves K194. D-ribose 5-phosphate-binding positions include R196, D220, and 224-228 (DTGGT).

This sequence belongs to the ribose-phosphate pyrophosphokinase family. Class I subfamily. Homohexamer. The cofactor is Mg(2+).

It localises to the cytoplasm. The catalysed reaction is D-ribose 5-phosphate + ATP = 5-phospho-alpha-D-ribose 1-diphosphate + AMP + H(+). It participates in metabolic intermediate biosynthesis; 5-phospho-alpha-D-ribose 1-diphosphate biosynthesis; 5-phospho-alpha-D-ribose 1-diphosphate from D-ribose 5-phosphate (route I): step 1/1. Involved in the biosynthesis of the central metabolite phospho-alpha-D-ribosyl-1-pyrophosphate (PRPP) via the transfer of pyrophosphoryl group from ATP to 1-hydroxyl of ribose-5-phosphate (Rib-5-P). This is Ribose-phosphate pyrophosphokinase from Buchnera aphidicola subsp. Schizaphis graminum (strain Sg).